A 315-amino-acid chain; its full sequence is tRNA dimethylallyltransferase (315 aa).

Position 11–18 (11–18) interacts with ATP; sequence GPTASGKS. 13–18 contacts substrate; sequence TASGKS. 2 interaction with substrate tRNA regions span residues 36–39 and 160–164; these read DSMQ and QRLIR.

The protein belongs to the IPP transferase family. As to quaternary structure, monomer. It depends on Mg(2+) as a cofactor.

It catalyses the reaction adenosine(37) in tRNA + dimethylallyl diphosphate = N(6)-dimethylallyladenosine(37) in tRNA + diphosphate. Functionally, catalyzes the transfer of a dimethylallyl group onto the adenine at position 37 in tRNAs that read codons beginning with uridine, leading to the formation of N6-(dimethylallyl)adenosine (i(6)A). In Rickettsia bellii (strain OSU 85-389), this protein is tRNA dimethylallyltransferase.